A 783-amino-acid chain; its full sequence is Protein DWD HYPERSENSITIVE TO UV-B 1 (783 aa).

WD repeat units follow at residues 145-198 and 212-256; these read GEFT…LKLP and SDSS…DPSL. Residues 382–389 carry the Nuclear localization signal motif; that stretch reads RKKESVVR. WD repeat units lie at residues 439 to 480, 485 to 525, 538 to 577, 581 to 621, 625 to 664, and 666 to 710; these read DNSR…IFRY, GSQS…STVT, DEFD…RLQV, MHQE…SRPC, SSTK…LHLN, and EIVP…RRLR.

In terms of assembly, interacts directly with DDB1A. Binds to COP1 and RUP1.

The protein localises to the nucleus. May act as a substrate receptor of a CUL4-RING E3 ubiquitin-protein ligase (CRL4) complex involved in the negative regulation of cellular responses to ultraviolet-B (UV-B) illumination, likely in coordination with RUP1. Interacts with COP1 and probably prevents the formation of active UVR8-COP1 complex, thus avoiding UVR8-COP1-mediated positive regulation of UV-B responses. This is Protein DWD HYPERSENSITIVE TO UV-B 1 from Arabidopsis thaliana (Mouse-ear cress).